The following is a 394-amino-acid chain: Ketoisovalerate oxidoreductase subunit VorA (394 aa).

In terms of assembly, heterotetramer of one alpha, one beta, one delta and one gamma chain.

It catalyses the reaction 3-methyl-2-oxobutanoate + 2 oxidized [2Fe-2S]-[ferredoxin] + CoA = 2-methylpropanoyl-CoA + 2 reduced [2Fe-2S]-[ferredoxin] + CO2 + H(+). In Pyrococcus horikoshii (strain ATCC 700860 / DSM 12428 / JCM 9974 / NBRC 100139 / OT-3), this protein is Ketoisovalerate oxidoreductase subunit VorA (vorA).